Consider the following 119-residue polypeptide: Beta-2-microglobulin (119 aa).

Positions 1-20 (MACFVVVALLVLLSLSGLEA) are cleaved as a signal peptide. Residues 25–114 (PKIQVYSRHP…VTFSTPKTVK (90 aa)) enclose the Ig-like C1-type domain. Cys45 and Cys100 are oxidised to a cystine.

Belongs to the beta-2-microglobulin family. Heterodimer of an alpha chain and a beta chain. Beta-2-microglobulin is the beta-chain of major histocompatibility complex class I molecules.

Its subcellular location is the secreted. Functionally, component of the class I major histocompatibility complex (MHC). Involved in the presentation of peptide antigens to the immune system. The polypeptide is Beta-2-microglobulin (B2M) (Leontopithecus chrysopygus (Golden-rumped lion tamarin)).